The primary structure comprises 99 residues: Protein translation factor SUI1 homolog (99 aa).

Belongs to the SUI1 family.

This Pyrococcus horikoshii (strain ATCC 700860 / DSM 12428 / JCM 9974 / NBRC 100139 / OT-3) protein is Protein translation factor SUI1 homolog.